The primary structure comprises 213 residues: MGKVLTMAMPKGRIFEEAAGLLRQAGYQLPEEFEDSRKLIIDVPEESLRFILAKPMDVTTYVEHGVADVGIAGKDVMLEEARDVYEVLDLNISKCHLAVAGLPGASWGGVAPRVATKYPNVASSYFREQGEQVEIIKLNGSIELAPLIGLADRIVDIVSTGQTLKENGLVETEHICDITSRFIVNPVSYRMKDAVIDEMAQRLARIIEGEETS.

This sequence belongs to the ATP phosphoribosyltransferase family. Short subfamily. In terms of assembly, heteromultimer composed of HisG and HisZ subunits.

It localises to the cytoplasm. The catalysed reaction is 1-(5-phospho-beta-D-ribosyl)-ATP + diphosphate = 5-phospho-alpha-D-ribose 1-diphosphate + ATP. Its pathway is amino-acid biosynthesis; L-histidine biosynthesis; L-histidine from 5-phospho-alpha-D-ribose 1-diphosphate: step 1/9. Catalyzes the condensation of ATP and 5-phosphoribose 1-diphosphate to form N'-(5'-phosphoribosyl)-ATP (PR-ATP). Has a crucial role in the pathway because the rate of histidine biosynthesis seems to be controlled primarily by regulation of HisG enzymatic activity. The sequence is that of ATP phosphoribosyltransferase from Bacillus pumilus (strain SAFR-032).